Reading from the N-terminus, the 283-residue chain is Urease accessory protein UreD (283 aa).

This sequence belongs to the UreD family. In terms of assembly, ureD, UreF and UreG form a complex that acts as a GTP-hydrolysis-dependent molecular chaperone, activating the urease apoprotein by helping to assemble the nickel containing metallocenter of UreC. The UreE protein probably delivers the nickel.

It localises to the cytoplasm. Required for maturation of urease via the functional incorporation of the urease nickel metallocenter. The sequence is that of Urease accessory protein UreD from Acaryochloris marina (strain MBIC 11017).